Consider the following 194-residue polypeptide: Auxin-induced protein 22A (194 aa).

The short motif at 13 to 17 (LRLGL) is the EAR-like (transcriptional repression) element. A disordered region spans residues 40–62 (EIDDVGDENSSSGGGGDRKMENK). A PB1 domain is found at 85 to 173 (KMYVKVSMDG…KRLRIMKRAD (89 aa)).

This sequence belongs to the Aux/IAA family. In terms of assembly, homodimers and heterodimers.

The protein resides in the nucleus. Its function is as follows. Aux/IAA proteins are short-lived transcriptional factors that function as repressors of early auxin response genes at low auxin concentrations. Repression is thought to result from the interaction with auxin response factors (ARFs), proteins that bind to the auxin-responsive promoter element (AuxRE). Formation of heterodimers with ARF proteins may alter their ability to modulate early auxin response genes expression. The sequence is that of Auxin-induced protein 22A (AUX22A) from Vigna radiata var. radiata (Mung bean).